The chain runs to 912 residues: Protein translocase subunit SecA (912 aa).

ATP-binding positions include glutamine 87, 105-109 (GEGKT), and aspartate 499. Residues cysteine 897, cysteine 899, cysteine 908, and histidine 909 each coordinate Zn(2+).

The protein belongs to the SecA family. In terms of assembly, monomer and homodimer. Part of the essential Sec protein translocation apparatus which comprises SecA, SecYEG and auxiliary proteins SecDF-YajC and YidC. It depends on Zn(2+) as a cofactor.

It localises to the cell inner membrane. Its subcellular location is the cytoplasm. The enzyme catalyses ATP + H2O + cellular proteinSide 1 = ADP + phosphate + cellular proteinSide 2.. In terms of biological role, part of the Sec protein translocase complex. Interacts with the SecYEG preprotein conducting channel. Has a central role in coupling the hydrolysis of ATP to the transfer of proteins into and across the cell membrane, serving both as a receptor for the preprotein-SecB complex and as an ATP-driven molecular motor driving the stepwise translocation of polypeptide chains across the membrane. In Rhizorhabdus wittichii (strain DSM 6014 / CCUG 31198 / JCM 15750 / NBRC 105917 / EY 4224 / RW1) (Sphingomonas wittichii), this protein is Protein translocase subunit SecA.